The following is a 141-amino-acid chain: Bombinins BLP-7/H-BO (141 aa).

Residues 1 to 18 form the signal peptide; sequence MNFKYIIAVSFLIASTYA. A propeptide spanning residues 19 to 43 is cleaved from the precursor; that stretch reads RSVKNDEQSLSQRDVLDEESLREIR. Residue Asn-70 is modified to Asparagine amide. A propeptide spanning residues 74–123 is cleaved from the precursor; it reads TAEEHEVMKRLEAVMRDLDSLDHPEEASEKETRGFNQEEIANLFTKKEKR. Leucine amide is present on Leu-140.

The protein belongs to the bombinin family. As to expression, expressed by the skin glands.

It localises to the secreted. Antimicrobial peptide with activity against Gram-positive and -negative bacteria and fungi. Shows activity against P.acnes (MIC=5 uM), E.coli (MIC=5-6.3 uM), S.aureus (MIC=5-6.3 uM), M.luteus, S.cerevisiae and C.albicans (MIC=10-12.5 uM). Also reduces the production of interleukin (IL)-8 and granulocyte-macrophage colony stimulating factor (CSF2) in normal human epidermal keratinocytes (NHEKs). Shows anticancer activity against three human hepatoma cell lines. In vivo, using the rat ear edema model, suppress P.acnes-induced skin inflammation, significantly reducing the ear thickness. Shows weak hemolytic activity against human erythrocytes. Functionally, shows weak antimicrobial activity (tested on E.coli, S.aureus and C.albicans). Shows high hemolytic activity against human erythrocytes (38% erythrocyte lysis at 80.0 uM, and up to 85% at 159.7 uM). The polypeptide is Bombinins BLP-7/H-BO (Bombina orientalis (Oriental fire-bellied toad)).